We begin with the raw amino-acid sequence, 219 residues long: Flagellar L-ring protein (219 aa).

The N-terminal stretch at 1–14 (MKRLVLISLVLAAG) is a signal peptide. C15 carries N-palmitoyl cysteine lipidation. C15 carries the S-diacylglycerol cysteine lipid modification.

This sequence belongs to the FlgH family. As to quaternary structure, the basal body constitutes a major portion of the flagellar organelle and consists of four rings (L,P,S, and M) mounted on a central rod.

It is found in the cell outer membrane. The protein resides in the bacterial flagellum basal body. Assembles around the rod to form the L-ring and probably protects the motor/basal body from shearing forces during rotation. This chain is Flagellar L-ring protein, found in Dechloromonas aromatica (strain RCB).